The chain runs to 404 residues: Probable tRNA sulfurtransferase (404 aa).

Positions 60-165 constitute a THUMP domain; the sequence is HEVAESLKEI…DEAAYISYED (106 aa). ATP contacts are provided by residues 183–184, 208–209, R265, G287, and Q296; these read ML and HF.

The protein belongs to the ThiI family.

It is found in the cytoplasm. The catalysed reaction is [ThiI sulfur-carrier protein]-S-sulfanyl-L-cysteine + a uridine in tRNA + 2 reduced [2Fe-2S]-[ferredoxin] + ATP + H(+) = [ThiI sulfur-carrier protein]-L-cysteine + a 4-thiouridine in tRNA + 2 oxidized [2Fe-2S]-[ferredoxin] + AMP + diphosphate. The enzyme catalyses [ThiS sulfur-carrier protein]-C-terminal Gly-Gly-AMP + S-sulfanyl-L-cysteinyl-[cysteine desulfurase] + AH2 = [ThiS sulfur-carrier protein]-C-terminal-Gly-aminoethanethioate + L-cysteinyl-[cysteine desulfurase] + A + AMP + 2 H(+). Its pathway is cofactor biosynthesis; thiamine diphosphate biosynthesis. Functionally, catalyzes the ATP-dependent transfer of a sulfur to tRNA to produce 4-thiouridine in position 8 of tRNAs, which functions as a near-UV photosensor. Also catalyzes the transfer of sulfur to the sulfur carrier protein ThiS, forming ThiS-thiocarboxylate. This is a step in the synthesis of thiazole, in the thiamine biosynthesis pathway. The sulfur is donated as persulfide by IscS. This is Probable tRNA sulfurtransferase from Streptococcus agalactiae serotype V (strain ATCC BAA-611 / 2603 V/R).